Here is a 28-residue protein sequence, read N- to C-terminus: Beta-bungarotoxin B chain-like (28 aa).

The N-terminal stretch at 1–24 (MSSGGLLLLLGLLTLCAELTPVSS) is a signal peptide.

In terms of assembly, heterodimer; disulfide-linked. The A chains have phospholipase A2 activity and the B chains show homology with the basic protease inhibitors. In terms of tissue distribution, expressed by the venom gland.

It localises to the secreted. Beta-1-bungarotoxin is a presynaptic neurotoxin of the venom. The B chain is homologous to venom basic protease inhibitors but has no protease inhibitor activity and blocks voltage-gated potassium channels (Kv). The chain is Beta-bungarotoxin B chain-like from Bungarus multicinctus (Many-banded krait).